A 169-amino-acid chain; its full sequence is Ribosome maturation factor RimM (169 aa).

Residues 93-167 (PENSFFISDI…KISVILPKGL (75 aa)) form the PRC barrel domain.

Belongs to the RimM family. In terms of assembly, binds ribosomal protein uS19.

Its subcellular location is the cytoplasm. In terms of biological role, an accessory protein needed during the final step in the assembly of 30S ribosomal subunit, possibly for assembly of the head region. Essential for efficient processing of 16S rRNA. May be needed both before and after RbfA during the maturation of 16S rRNA. It has affinity for free ribosomal 30S subunits but not for 70S ribosomes. In Ruminiclostridium cellulolyticum (strain ATCC 35319 / DSM 5812 / JCM 6584 / H10) (Clostridium cellulolyticum), this protein is Ribosome maturation factor RimM.